The following is a 70-amino-acid chain: Protein SlyX homolog (70 aa).

Belongs to the SlyX family.

This Shewanella putrefaciens (strain CN-32 / ATCC BAA-453) protein is Protein SlyX homolog.